The following is a 610-amino-acid chain: UvrABC system protein C (610 aa).

The 79-residue stretch at 16 to 94 (SQPGVYRMYD…IKLYQPRYNV (79 aa)) folds into the GIY-YIG domain. Residues 204–239 (DQVLTQLISRMETASQNLEFEEAARIRDQIQAVRRV) form the UVR domain.

The protein belongs to the UvrC family. As to quaternary structure, interacts with UvrB in an incision complex.

Its subcellular location is the cytoplasm. In terms of biological role, the UvrABC repair system catalyzes the recognition and processing of DNA lesions. UvrC both incises the 5' and 3' sides of the lesion. The N-terminal half is responsible for the 3' incision and the C-terminal half is responsible for the 5' incision. This is UvrABC system protein C from Escherichia coli O1:K1 / APEC.